The primary structure comprises 401 residues: L-rhamnonate dehydratase (401 aa).

The substrate site is built by H29 and R55. Mg(2+) contacts are provided by D222, E248, and E276. The active-site Proton acceptor is the H325. E345 contacts substrate.

This sequence belongs to the mandelate racemase/muconate lactonizing enzyme family. RhamD subfamily. In terms of assembly, homooctamer; tetramer of dimers. Mg(2+) serves as cofactor.

The enzyme catalyses L-rhamnonate = 2-dehydro-3-deoxy-L-rhamnonate + H2O. Its function is as follows. Catalyzes the dehydration of L-rhamnonate to 2-keto-3-deoxy-L-rhamnonate (KDR). Can also dehydrate L-lyxonate, L-mannonate and D-gulonate, although less efficiently, but not 2-keto-4-hydroxyheptane-1,7-dioate. The protein is L-rhamnonate dehydratase (rhmD) of Escherichia coli (strain K12).